A 205-amino-acid polypeptide reads, in one-letter code: FMN reductase (NADH) RutF (205 aa).

Residues 171–205 (PRAPRSGSAPAEPARAARALGARPAEGPALALRSA) form a disordered region.

The protein belongs to the non-flavoprotein flavin reductase family. RutF subfamily.

It carries out the reaction FMNH2 + NAD(+) = FMN + NADH + 2 H(+). Its function is as follows. Catalyzes the reduction of FMN to FMNH2 which is used to reduce pyrimidine by RutA via the Rut pathway. The protein is FMN reductase (NADH) RutF of Methylorubrum extorquens (strain DSM 6343 / CIP 106787 / DM4) (Methylobacterium extorquens).